The sequence spans 255 residues: Protein DAL82 (255 aa).

A disordered region spans residues 87–149 (PEHPRPRTKF…SQPLPLDSIT (63 aa)). A compositionally biased stretch (basic and acidic residues) spans 128 to 138 (PNNHSSDDEHS).

Functionally, positive regulator of allophanate-induced genes in S.cerevisiae. The chain is Protein DAL82 (DAL82) from Saccharomyces cerevisiae (strain ATCC 204508 / S288c) (Baker's yeast).